A 140-amino-acid chain; its full sequence is Large ribosomal subunit protein uL11 (140 aa).

It belongs to the universal ribosomal protein uL11 family. Part of the ribosomal stalk of the 50S ribosomal subunit. Interacts with L10 and the large rRNA to form the base of the stalk. L10 forms an elongated spine to which L12 dimers bind in a sequential fashion forming a multimeric L10(L12)X complex. Post-translationally, one or more lysine residues are methylated.

Forms part of the ribosomal stalk which helps the ribosome interact with GTP-bound translation factors. In Oleidesulfovibrio alaskensis (strain ATCC BAA-1058 / DSM 17464 / G20) (Desulfovibrio alaskensis), this protein is Large ribosomal subunit protein uL11.